Reading from the N-terminus, the 286-residue chain is AB hydrolase superfamily protein YfhM (286 aa).

Positions 27–272 constitute an AB hydrolase-1 domain; that stretch reads PLIVLLHGFP…ASHWINHEKP (246 aa). Asp103 acts as the Nucleophile in catalysis. The active-site Proton donor is Tyr210. The active-site Proton acceptor is the His265.

It belongs to the AB hydrolase superfamily. Epoxide hydrolase family.

This Bacillus subtilis (strain 168) protein is AB hydrolase superfamily protein YfhM (yfhM).